A 95-amino-acid chain; its full sequence is Small ribosomal subunit protein mS37 (95 aa).

Positions 27–69 (ANRCLVLMSNLLQCWSSNGHMNPVCEKLATDLKACTSQNVMGS) constitute a CHCH domain. 2 consecutive short sequence motifs (cx9C motif) follow at residues 30 to 40 (CLVLMSNLLQC) and 51 to 61 (CEKLATDLKAC). Cystine bridges form between Cys30-Cys61 and Cys40-Cys51.

The protein belongs to the mitochondrion-specific ribosomal protein mS37 family. As to quaternary structure, component of the mitochondrial small ribosomal subunit.

The protein localises to the mitochondrion. In terms of biological role, involved in mitochondrial genome encoded proteins translation. The sequence is that of Small ribosomal subunit protein mS37 (MRP10) from Eremothecium gossypii (strain ATCC 10895 / CBS 109.51 / FGSC 9923 / NRRL Y-1056) (Yeast).